Here is a 225-residue protein sequence, read N- to C-terminus: Proteasome activator 28 (225 aa).

Belongs to the PA28 family. As to quaternary structure, homoheptamer. The homoheptamer associates with the 20S proteasome.

Its subcellular location is the nucleus. Functionally, subunit of the 11S REG (also called PA28) proteasome regulator, a doughnut-shaped homoheptamer which associates with the proteasome. 11S REG-gamma activates preferentially the trypsin-like catalytic subunit of the proteasome. May also be involved in cell cycle regulation. This is Proteasome activator 28 (psmE3) from Dictyostelium discoideum (Social amoeba).